A 472-amino-acid chain; its full sequence is POU domain, class 5, transcription factor 1 (472 aa).

Disordered regions lie at residues 127–154 (MPSE…YHLT) and 187–255 (ISQA…LTTE). Residues 220-234 (TAQNIPSAQAQSAPR) are compositionally biased toward polar residues. A compositionally biased stretch (low complexity) spans 235-245 (SSGSSSGGCSN). Over residues 246–255 (SEEEETLTTE) the composition is skewed to acidic residues. One can recognise a POU-specific domain in the interval 249–323 (EETLTTEDLE…LLQRWLNEAE (75 aa)). The segment at residues 343-402 (KRKRRTSLEGTVRSALESYFVKCPKPNTLEITHISDDLGLERDVVRVWFCNRRQKGKRLA) is a DNA-binding region (homeobox).

The protein belongs to the POU transcription factor family. Class-7 subfamily.

The protein resides in the nucleus. Functionally, involved in early development of embryos, especially in the process of gastrulation. May play an important role in establishing and specifying rhombomeric segments. Seems to be required to maintain the cells in a highly undifferentiated state. In contrast to POU2, T-POU2 lacks DNA-binding activity because of its incomplete pou domain structure. Overexpression of POU2 does not have any effect on development, whereas overexpression of t-POU2 causes developmental retardation or arrest before gastrulation. In Danio rerio (Zebrafish), this protein is POU domain, class 5, transcription factor 1 (pou5f1).